The chain runs to 350 residues: Uroporphyrinogen decarboxylase (350 aa).

Residues 28–32 (RQAGR), Asp-78, Tyr-154, Thr-209, and His-325 contribute to the substrate site.

Belongs to the uroporphyrinogen decarboxylase family. In terms of assembly, homodimer.

The protein localises to the cytoplasm. It carries out the reaction uroporphyrinogen III + 4 H(+) = coproporphyrinogen III + 4 CO2. It functions in the pathway porphyrin-containing compound metabolism; protoporphyrin-IX biosynthesis; coproporphyrinogen-III from 5-aminolevulinate: step 4/4. In terms of biological role, catalyzes the decarboxylation of four acetate groups of uroporphyrinogen-III to yield coproporphyrinogen-III. This Nitrobacter hamburgensis (strain DSM 10229 / NCIMB 13809 / X14) protein is Uroporphyrinogen decarboxylase.